A 61-amino-acid polypeptide reads, in one-letter code: Potassium channel toxin alpha-KTx 3.18 (61 aa).

Residues 1–23 form the signal peptide; that stretch reads MKMFFTVLVTLFVCSMIIGICEG. Disulfide bonds link Cys-30–Cys-50, Cys-36–Cys-55, and Cys-40–Cys-57. Lys-60 bears the Lysine amide mark.

As to expression, expressed by the venom gland.

It localises to the secreted. Inhibits voltage-gated potassium channel rKv1.1/KCNA1 at nanomolar ranges (IC(50)=90 +-2 nM, reduction of current by 30% at 50 nM or toxin). The polypeptide is Potassium channel toxin alpha-KTx 3.18 (Mesobuthus eupeus (Lesser Asian scorpion)).